A 254-amino-acid polypeptide reads, in one-letter code: Alcohol dehydrogenase (254 aa).

Residue 10–33 (FVAGLGGIGLDTSRELVKRDLKNL) participates in NAD(+) binding. S138 provides a ligand contact to substrate. Residue Y151 is the Proton acceptor of the active site.

Belongs to the short-chain dehydrogenases/reductases (SDR) family. In terms of assembly, homodimer.

The enzyme catalyses a primary alcohol + NAD(+) = an aldehyde + NADH + H(+). It carries out the reaction a secondary alcohol + NAD(+) = a ketone + NADH + H(+). The chain is Alcohol dehydrogenase (Adh) from Drosophila subobscura (Fruit fly).